We begin with the raw amino-acid sequence, 326 residues long: uncharacterized protein (326 aa).

This is an uncharacterized protein from Escherichia coli (strain K12).